The primary structure comprises 504 residues: MNKFDEFIESNEKDLDVDTSTRNSIISMSPVRKTGRKIRSASSNGYRLEHHRTSSAGSMHSQRLMTPTRLNDQDHPLQAKPDARRVVTRHSSVSVPNAMSKRRSLIQPMVVPTTPESQNNLPSVSHSEGSYGIPLESTTVLSSEQAMASGLRRSRNGSSQSVNSMIATTIPTNGVDVSALLQSLATKELELLECKQKIEDLKKQTQHEEQNYTRRARELHELKEQVSKHLDPSLNTPVKNRAFSPVYQNIPLESRTENAGNSSLPSSVSKPKNMGHQSTNQSRSVSPQDIQERRQRDDSSDSSKQSLWSKPLALFNQFDKIIQHEIERTLNWDDSLSGTPEVQEGTPTSNSESSAQQYDNEAPGARQKSPSQGSVSRSLWSFVSDVKAGLLGIEEENDNDVITDNRCDPVYKSDRQHEQKKSTHKITNRGQAEDSGDDSSLNTRKFKTTTKFQKDNAGNNSLTDESGHRTREKKSKRSSNKLSFIGEPDNDNSSVKNSVEMTDF.

Residues 32 to 62 form a disordered region; the sequence is RKTGRKIRSASSNGYRLEHHRTSSAGSMHSQ. Positions 179–231 form a coiled coil; the sequence is ALLQSLATKELELLECKQKIEDLKKQTQHEEQNYTRRARELHELKEQVSKHLD. The residue at position 236 (threonine 236) is a Phosphothreonine. A phosphoserine mark is found at serine 244 and serine 286. 3 disordered regions span residues 252-306, 332-377, and 400-504; these read LESR…SKQS, WDDS…SVSR, and DVIT…MTDF. Over residues 257–287 the composition is skewed to polar residues; the sequence is ENAGNSSLPSSVSKPKNMGHQSTNQSRSVSP. Residues 290–301 are compositionally biased toward basic and acidic residues; it reads IQERRQRDDSSD. Polar residues-rich tracts occupy residues 332–359 and 368–377; these read WDDSLSGTPEVQEGTPTSNSESSAQQYD and KSPSQGSVSR. The segment covering 403–421 has biased composition (basic and acidic residues); sequence TDNRCDPVYKSDRQHEQKK. A compositionally biased stretch (basic residues) spans 470 to 479; that stretch reads TREKKSKRSS. The segment covering 491 to 504 has biased composition (polar residues); it reads DNSSVKNSVEMTDF.

It belongs to the TDA11 family.

It is found in the cytoplasm. The chain is Topoisomerase I damage affected protein 11 (TDA11) from Saccharomyces cerevisiae (strain Lalvin EC1118 / Prise de mousse) (Baker's yeast).